The chain runs to 440 residues: Chromosome partition protein MukF (440 aa).

The tract at residues 208-236 (LDETSGNLRELQDTLNAAGDKLQSQLLRI) is leucine-zipper.

It belongs to the MukF family. Interacts, and probably forms a ternary complex, with MukE and MukB via its C-terminal region. The complex formation is stimulated by calcium or magnesium. It is required for an interaction between MukE and MukB.

Its subcellular location is the cytoplasm. The protein localises to the nucleoid. Its function is as follows. Involved in chromosome condensation, segregation and cell cycle progression. May participate in facilitating chromosome segregation by condensation DNA from both sides of a centrally located replisome during cell division. Not required for mini-F plasmid partitioning. Probably acts via its interaction with MukB and MukE. Overexpression results in anucleate cells. It has a calcium binding activity. In Histophilus somni (strain 129Pt) (Haemophilus somnus), this protein is Chromosome partition protein MukF.